The sequence spans 2028 residues: Phosphatidylinositol 4-kinase alpha 1 (2028 aa).

The interval P184–S241 is disordered. Polar residues predominate over residues Q192 to Y215. A compositionally biased stretch (low complexity) spans S231 to S241. The PIK helical domain occupies T1483–Q1659. Residues V1660–V1773 form a pleckstrin homology (PH) domain conferring phosphoinositide binding specificity region. The PI3K/PI4K catalytic domain occupies V1734–T2012. The G-loop stretch occupies residues L1740–V1746. Residues Q1876 to N1884 form a catalytic loop region. Residues H1895 to S1920 are activation loop.

The protein belongs to the PI3/PI4-kinase family. Type III PI4K subfamily. As to quaternary structure, interacts in vitro with actin filaments via its PH domain. In terms of tissue distribution, present in leaves and inflorescences.

The protein localises to the membrane. Its subcellular location is the cytoplasm. It localises to the perinuclear region. The catalysed reaction is a 1,2-diacyl-sn-glycero-3-phospho-(1D-myo-inositol) + ATP = a 1,2-diacyl-sn-glycero-3-phospho-(1D-myo-inositol 4-phosphate) + ADP + H(+). Repressed by PtdIns4P, adenosine and wortmannin, but stimulated by other negatively charged lipids such as PtdIns3P, PtdOH, and phosphatidyl-serine (PtdSer). Acts on phosphatidylinositol (PtdIns) in the first committed step in the production of the second messenger inositol-1,4,5,-trisphosphate. Can bind to phosphatidylinositol 4-monophosphate (PI-4-P or PtdIns4P), phosphatidylinositol 4,5-bisphosphate (PI-4,5-P2 or PtdIns4,5P2), and phosphatidic acid (PtdOH), but not to 3-phosphoinositides. May function upstream of the cold response phosphoinositide-dependent phospholipase C (PI-PLC) pathway. The chain is Phosphatidylinositol 4-kinase alpha 1 from Arabidopsis thaliana (Mouse-ear cress).